Here is a 116-residue protein sequence, read N- to C-terminus: Large ribosomal subunit protein uL18 (116 aa).

It belongs to the universal ribosomal protein uL18 family. In terms of assembly, part of the 50S ribosomal subunit; part of the 5S rRNA/L5/L18/L25 subcomplex. Contacts the 5S and 23S rRNAs.

In terms of biological role, this is one of the proteins that bind and probably mediate the attachment of the 5S RNA into the large ribosomal subunit, where it forms part of the central protuberance. In Chromohalobacter salexigens (strain ATCC BAA-138 / DSM 3043 / CIP 106854 / NCIMB 13768 / 1H11), this protein is Large ribosomal subunit protein uL18.